The primary structure comprises 286 residues: Ribose-phosphate pyrophosphokinase (286 aa).

Residues 34–36 and 91–92 each bind ATP; these read DGE and RQ. Mg(2+) is bound by residues H124 and D161. K184 is an active-site residue. Residues R186, D210, and 214 to 218 each bind D-ribose 5-phosphate; that span reads STGGT.

This sequence belongs to the ribose-phosphate pyrophosphokinase family. Class III (archaeal) subfamily. It depends on Mg(2+) as a cofactor.

It localises to the cytoplasm. The enzyme catalyses D-ribose 5-phosphate + ATP = 5-phospho-alpha-D-ribose 1-diphosphate + AMP + H(+). The protein operates within metabolic intermediate biosynthesis; 5-phospho-alpha-D-ribose 1-diphosphate biosynthesis; 5-phospho-alpha-D-ribose 1-diphosphate from D-ribose 5-phosphate (route I): step 1/1. Its function is as follows. Involved in the biosynthesis of the central metabolite phospho-alpha-D-ribosyl-1-pyrophosphate (PRPP) via the transfer of pyrophosphoryl group from ATP to 1-hydroxyl of ribose-5-phosphate (Rib-5-P). The polypeptide is Ribose-phosphate pyrophosphokinase (Thermoplasma acidophilum (strain ATCC 25905 / DSM 1728 / JCM 9062 / NBRC 15155 / AMRC-C165)).